A 162-amino-acid chain; its full sequence is Cyclic pyranopterin monophosphate synthase (162 aa).

Residues 75–77 and 113–114 contribute to the substrate site; these read LCH and ME. Asp128 is an active-site residue.

This sequence belongs to the MoaC family. Homohexamer; trimer of dimers.

It carries out the reaction (8S)-3',8-cyclo-7,8-dihydroguanosine 5'-triphosphate = cyclic pyranopterin phosphate + diphosphate. It participates in cofactor biosynthesis; molybdopterin biosynthesis. Catalyzes the conversion of (8S)-3',8-cyclo-7,8-dihydroguanosine 5'-triphosphate to cyclic pyranopterin monophosphate (cPMP). The protein is Cyclic pyranopterin monophosphate synthase of Burkholderia ambifaria (strain MC40-6).